The chain runs to 366 residues: Flagellar P-ring protein (366 aa).

The signal sequence occupies residues 1–20; sequence MVIKFLSALILLLVTTAAQA.

This sequence belongs to the FlgI family. In terms of assembly, the basal body constitutes a major portion of the flagellar organelle and consists of four rings (L,P,S, and M) mounted on a central rod.

It is found in the periplasm. Its subcellular location is the bacterial flagellum basal body. Functionally, assembles around the rod to form the L-ring and probably protects the motor/basal body from shearing forces during rotation. This Escherichia coli O1:K1 / APEC protein is Flagellar P-ring protein.